The chain runs to 139 residues: Protein LTO1 homolog (139 aa).

This sequence belongs to the LTO1 family.

The chain is Protein LTO1 homolog from Dictyostelium discoideum (Social amoeba).